Consider the following 318-residue polypeptide: Peroxisomal targeting signal 2 receptor (318 aa).

WD repeat units follow at residues 60–91, 104–136, 148–179, 191–222, 235–266, and 279–310; these read DWNDGLFDVTWSENNEHVLVTCSGDGSLQLWD, EHTQEVYSVDWSQTRGEQLVVSGSWDQTVKVWD, GHESVIYSTIWSPHIPGCFASASGDQTLRIWD, AHQTEILSCDWCKYNENLVVTGAVDCSLRGWD, GHTYAIRRVKFSPFHASVLASCSYDFTVRFWN, and HHTEFTCGLDLSLQSPTQVADCSWDETIKIYD.

The protein belongs to the WD repeat peroxin-7 family. As to quaternary structure, interacts with PEX5; interaction only takes place when PEX7 is associated with cargo proteins. Interacts with VWA8.

The protein resides in the cytoplasm. It is found in the cytosol. The protein localises to the peroxisome matrix. Its function is as follows. Receptor required for the peroxisomal import of proteins containing a C-terminal PTS2-type peroxisomal targeting signal. Specifically binds to cargo proteins containing a PTS2 peroxisomal targeting signal in the cytosol. Cargo protein-binding triggers interaction with PEX5 and formation of a ternary complex composed of PEX5 and PEX7 along with PTS2-containing cargo proteins, which is tranlocated into peroxisomes by passing through the PEX13-PEX14 docking complex. This chain is Peroxisomal targeting signal 2 receptor, found in Mus musculus (Mouse).